A 133-amino-acid chain; its full sequence is ATP synthase epsilon chain, chloroplastic (133 aa).

This sequence belongs to the ATPase epsilon chain family. F-type ATPases have 2 components, CF(1) - the catalytic core - and CF(0) - the membrane proton channel. CF(1) has five subunits: alpha(3), beta(3), gamma(1), delta(1), epsilon(1). CF(0) has three main subunits: a, b and c.

Its subcellular location is the plastid. It localises to the chloroplast thylakoid membrane. Functionally, produces ATP from ADP in the presence of a proton gradient across the membrane. This chain is ATP synthase epsilon chain, chloroplastic, found in Cyanidium caldarium (Red alga).